The primary structure comprises 271 residues: Large ribosomal subunit protein uL18 (271 aa).

Residues 245-264 (IRENPCPPKKERTKPADAKR) show a composition bias toward basic and acidic residues. Residues 245-271 (IRENPCPPKKERTKPADAKRWSPQAHL) form a disordered region.

The protein belongs to the universal ribosomal protein uL18 family. As to quaternary structure, component of the large ribosomal subunit (LSU).

It is found in the cytoplasm. The protein localises to the nucleus. Component of the ribosome, a large ribonucleoprotein complex responsible for the synthesis of proteins in the cell. The small ribosomal subunit (SSU) binds messenger RNAs (mRNAs) and translates the encoded message by selecting cognate aminoacyl-transfer RNA (tRNA) molecules. The large subunit (LSU) contains the ribosomal catalytic site termed the peptidyl transferase center (PTC), which catalyzes the formation of peptide bonds, thereby polymerizing the amino acids delivered by tRNAs into a polypeptide chain. The nascent polypeptides leave the ribosome through a tunnel in the LSU and interact with protein factors that function in enzymatic processing, targeting, and the membrane insertion of nascent chains at the exit of the ribosomal tunnel. This chain is Large ribosomal subunit protein uL18 (RPL5), found in Dunaliella salina (Green alga).